The primary structure comprises 331 residues: Fructose-1,6-bisphosphatase class 1 2 (331 aa).

Positions 80, 98, 100, and 101 each coordinate Mg(2+). Substrate contacts are provided by residues 101-104 (DGSS) and asparagine 189. Position 261 (glutamate 261) interacts with Mg(2+).

The protein belongs to the FBPase class 1 family. In terms of assembly, homotetramer. The cofactor is Mg(2+).

Its subcellular location is the cytoplasm. It catalyses the reaction beta-D-fructose 1,6-bisphosphate + H2O = beta-D-fructose 6-phosphate + phosphate. Its pathway is carbohydrate biosynthesis; Calvin cycle. This is Fructose-1,6-bisphosphatase class 1 2 from Cereibacter sphaeroides (strain ATCC 17023 / DSM 158 / JCM 6121 / CCUG 31486 / LMG 2827 / NBRC 12203 / NCIMB 8253 / ATH 2.4.1.) (Rhodobacter sphaeroides).